The primary structure comprises 81 residues: Large ribosomal subunit protein bL31B (81 aa).

The protein belongs to the bacterial ribosomal protein bL31 family. Type B subfamily. As to quaternary structure, part of the 50S ribosomal subunit.

In Lactococcus lactis subsp. lactis (strain IL1403) (Streptococcus lactis), this protein is Large ribosomal subunit protein bL31B.